Consider the following 859-residue polypeptide: MPKWIRSTLNHIIPRRPFICSFNSFLLLKNVSHAKLSFSMSSRGFRSNNFIQAQLKHPSILSKEDLDLLSDSDDWEEPDCIQLETEKQEKKIITDIHKEDPVDKKPMRDKNVMNFINKDSPLSWNDMFKPSIIQPPQLISENSFDQSSQKKSRSTGFKNPLRPALKKESSFDELQNSSISQERSLEMINENEKKKMQFGEKIAVLTQRPSFTELQNDQDDSNLNPHNGVKVKIPICLSKEQESIIKLAENGHNIFYTGSAGTGKSILLREMIKVLKGIYGRENVAVTASTGLAACNIGGITIHSFAGIGLGKGDADKLYKKVRRSRKHLRRWENIGALVVDEISMLDAELLDKLDFIARKIRKNHQPFGGIQLIFCGDFFQLPPVSKDPNRPTKFAFESKAWKEGVKMTIMLQKVFRQRGDVKFIDMLNRMRLGNIDDETEREFKKLSRPLPDDEIIPAELYSTRMEVERANNSRLSKLPGQVHIFNAIDGGALEDEELKERLLQNFLAPKELHLKVGAQVMMVKNLDATLVNGSLGKVIEFMDPETYFCYEALTNDPSMPPEKLETWAENPSKLKAAMEREQSDGEESAVASRKSSVKEGFAKSDIGEPVSPLDSSVFDFMKRVKTDDEVVLENIKRKEQLMQTIHQNSAGKRRLPLVRFKASDMSTRMVLVEPEDWAIEDENEKPLVSRVQLPLMLAWSLSIHKSQGQTLPKVKVDLRRVFEKGQAYVALSRAVSREGLQVLNFDRTRIKAHQKVIDFYLTLSSAESAYKQLEADEQVKKRKLDYAPGPKYKAKSKSKSNSPAPISATTQSNSGIAAMLQRHSRKRFQLKKESNSNQVHSLVSDEPRGQDTEDHILE.

A mitochondrion-targeting transit peptide spans 1–45 (MPKWIRSTLNHIIPRRPFICSFNSFLLLKNVSHAKLSFSMSSRGF). 2 positions are modified to phosphoserine: serine 70 and serine 72. The segment covering 142–157 (NSFDQSSQKKSRSTGF) has biased composition (polar residues). The disordered stretch occupies residues 142–183 (NSFDQSSQKKSRSTGFKNPLRPALKKESSFDELQNSSISQER). Phosphoserine is present on serine 169. Residues 172–182 (DELQNSSISQE) show a composition bias toward polar residues. 258–265 (GSAGTGKS) contributes to the ATP binding site. Serine 584 is modified (phosphoserine). The DNA-binding element occupies 727–746 (QAYVALSRAVSREGLQVLNF). The segment at 782-859 (KRKLDYAPGP…GQDTEDHILE (78 aa)) is disordered. Low complexity predominate over residues 800–809 (KSNSPAPISA). The span at 844–859 (VSDEPRGQDTEDHILE) shows a compositional bias: basic and acidic residues.

The protein belongs to the helicase family. PIF1 subfamily. As to quaternary structure, monomer in solution. DNA binding induces dimerization. Associates with mitochondrial and telomeric DNA. Binding to mtDNA is non-specific and the protein seems to coat the entire mtDNA molecule. Binds to the telomerase RNA TLC1. Interacts with the mitochondrial single-strand DNA-binding protein RIM1. The cofactor is Mg(2+). Mn(2+) is required as a cofactor. Phosphorylated. Undergoes RAD53-dependent phosphorylation in response to loss of mtDNA.

It localises to the nucleus. It is found in the nucleolus. The protein resides in the mitochondrion inner membrane. It carries out the reaction Couples ATP hydrolysis with the unwinding of duplex DNA at the replication fork by translocating in the 5'-3' direction. This creates two antiparallel DNA single strands (ssDNA). The leading ssDNA polymer is the template for DNA polymerase III holoenzyme which synthesizes a continuous strand.. The catalysed reaction is ATP + H2O = ADP + phosphate + H(+). In terms of biological role, DNA-dependent ATPase and 5'-3' DNA helicase required for the maintenance of both mitochondrial and nuclear genome stability. Efficiently unwinds G-quadruplex (G4) DNA structures and forked RNA-DNA hybrids. Appears to move along DNA in single nucleotide or base pair steps, powered by hydrolysis of 1 molecule of ATP. Processes at an unwinding rate of about 75 bp/s. Resolves G4 structures, preventing replication pausing and double-strand breaks (DSBs) at G4 motifs. Involved in the maintenance of telomeric DNA. Inhibits telomere elongation, de novo telomere formation and telomere addition to DSBs via catalytic inhibition of telomerase. Reduces the processivity of telomerase by displacing active telomerase from DNA ends. Releases telomerase by unwinding the short telomerase RNA/telomeric DNA hybrid that is the intermediate in the telomerase reaction. Involved in the maintenance of ribosomal (rDNA). Required for efficient fork arrest at the replication fork barrier within rDNA. Involved in the maintenance of mitochondrial (mtDNA). Required to maintain mtDNA under conditions that introduce dsDNA breaks in mtDNA, either preventing or repairing dsDNA breaks. May inhibit replication progression to allow time for repair. May have a general role in chromosomal replication by affecting Okazaki fragment maturation. May have a role in conjunction with DNA2 helicase/nuclease in 5'-flap extension during Okazaki fragment processing. This Saccharomyces cerevisiae (strain YJM789) (Baker's yeast) protein is ATP-dependent DNA helicase PIF1.